A 370-amino-acid polypeptide reads, in one-letter code: MKYQLQKTDGRARLGKLIFERGLVDTPAFMPVGTYGSVKSMTPDEITETGAQIILGNTFHLWLRPGQDVIKLHGDLHDFMQWQGPILTDSGGFQVFSLNSMRKIEEKGVSFRHPLNGSEIFLSPEKSMEIQLDLGSDIVMVFDECPPYPSDLIYMKSSMEMSLRWANRSREHFNNLNNKNALFGIIQGGLSLELRETSLQGLLQIGFDGYAIGGLAVGEPKEEMYRVLDFLCPRIPDNKPRYLMGVGKPENLVEGVRRGIDMFDCVMPTRNARNGHLFVTHGVIKIRNTRYKTDISPLDPDCDCYTCRHYSRAYLHHLDRCNEILGARLNSIHNVRYYQRLMADLRHAIYEERLECFVEEFYKKIGLSIS.

Catalysis depends on Asp-89, which acts as the Proton acceptor. Residues 89 to 93 (DSGGF), Asp-143, Gln-187, and Gly-214 each bind substrate. An RNA binding region spans residues 245-251 (GVGKPEN). Asp-264 acts as the Nucleophile in catalysis. The segment at 269-273 (TRNAR) is RNA binding; important for wobble base 34 recognition. Residues Cys-302, Cys-304, Cys-307, and His-333 each contribute to the Zn(2+) site.

The protein belongs to the queuine tRNA-ribosyltransferase family. Homodimer. Within each dimer, one monomer is responsible for RNA recognition and catalysis, while the other monomer binds to the replacement base PreQ1. The cofactor is Zn(2+).

It catalyses the reaction 7-aminomethyl-7-carbaguanine + guanosine(34) in tRNA = 7-aminomethyl-7-carbaguanosine(34) in tRNA + guanine. The protein operates within tRNA modification; tRNA-queuosine biosynthesis. Its function is as follows. Catalyzes the base-exchange of a guanine (G) residue with the queuine precursor 7-aminomethyl-7-deazaguanine (PreQ1) at position 34 (anticodon wobble position) in tRNAs with GU(N) anticodons (tRNA-Asp, -Asn, -His and -Tyr). Catalysis occurs through a double-displacement mechanism. The nucleophile active site attacks the C1' of nucleotide 34 to detach the guanine base from the RNA, forming a covalent enzyme-RNA intermediate. The proton acceptor active site deprotonates the incoming PreQ1, allowing a nucleophilic attack on the C1' of the ribose to form the product. After dissociation, two additional enzymatic reactions on the tRNA convert PreQ1 to queuine (Q), resulting in the hypermodified nucleoside queuosine (7-(((4,5-cis-dihydroxy-2-cyclopenten-1-yl)amino)methyl)-7-deazaguanosine). The sequence is that of Queuine tRNA-ribosyltransferase from Hamiltonella defensa subsp. Acyrthosiphon pisum (strain 5AT).